Reading from the N-terminus, the 385-residue chain is ATP phosphoribosyltransferase regulatory subunit (385 aa).

This sequence belongs to the class-II aminoacyl-tRNA synthetase family. HisZ subfamily. As to quaternary structure, heteromultimer composed of HisG and HisZ subunits.

It is found in the cytoplasm. The protein operates within amino-acid biosynthesis; L-histidine biosynthesis; L-histidine from 5-phospho-alpha-D-ribose 1-diphosphate: step 1/9. Functionally, required for the first step of histidine biosynthesis. May allow the feedback regulation of ATP phosphoribosyltransferase activity by histidine. This Laribacter hongkongensis (strain HLHK9) protein is ATP phosphoribosyltransferase regulatory subunit.